The following is a 772-amino-acid chain: Metal transporter CNNM4 (772 aa).

Topologically, residues 1 to 175 are extracellular; the sequence is MAPGGGGGRR…SLLFMVEEHG (175 aa). An N-linked (GlcNAc...) asparagine glycan is attached at N120. The chain crosses the membrane as a helical span at residues 176-196; the sequence is RFLPLWLHILLVLVLLVLSGI. One can recognise a CNNM transmembrane domain in the interval 176–356; sequence RFLPLWLHIL…EPYNDLVKEE (181 aa). The Cytoplasmic portion of the chain corresponds to 197–237; that stretch reads FSGLNLGLMALDPMELRIVQNCGTEKERRYARKIEPIRRKG. An intramembrane region (helical) is located at residues 238–258; it reads NYLLCSLLLGNVLVNTSLTIL. The Cytoplasmic portion of the chain corresponds to 259-261; the sequence is LDN. A helical transmembrane segment spans residues 262 to 282; the sequence is LIGSGIMAVASSTIGIVIFGE. Residues 283–290 are Extracellular-facing; it reads ILPQALCS. A helical transmembrane segment spans residues 291 to 313; sequence RHGLAVGANTIVLTKIFMLLTFP. The Cytoplasmic portion of the chain corresponds to 314-772; it reads LSFPISKLLD…LHRASQEGTI (459 aa). 2 CBS domains span residues 375–436 and 443–509; these read MTQL…CTPL and YNHP…ILDE. The tract at residues 647–676 is disordered; sequence PDRSPAHPTPLSRSASLSYPDRNTDMTPSS. Residues S658, S662, and S767 each carry the phosphoserine modification.

It belongs to the ACDP family. As to quaternary structure, interacts with COX11. In terms of tissue distribution, present in spinal cord dorsal horn neurons and in developing teeth (at protein level). In the tooth, higher expression is found in the ameloblasts during the transition and maturation phases of amelogenesis; reduced expression in the odontoblasts.

Its subcellular location is the cell membrane. Probable metal transporter. The interaction with the metal ion chaperone COX11 suggests that it may play a role in sensory neuron functions. May play a role in biomineralization and retinal function. This is Metal transporter CNNM4 (Cnnm4) from Rattus norvegicus (Rat).